A 65-amino-acid chain; its full sequence is uncharacterized protein (65 aa).

This is an uncharacterized protein from Saccharolobus islandicus (Sulfolobus islandicus).